The chain runs to 607 residues: Zinc finger protein 750 (607 aa).

Residues 25-51 (YQCFQCPFTCNIKSHLFNHMKYNLCKN) form a CCHC-type zinc finger. Zn(2+)-binding residues include C27, C30, H43, and C49. Residues 60–78 (MEQTGKASRASQHSPAFSH) are compositionally biased toward polar residues. Disordered stretches follow at residues 60–133 (MEQT…DKSE), 318–467 (RAVQ…SSQE), 482–511 (QALP…QDLE), and 575–607 (GQKR…SQNC). Basic and acidic residues-rich tracts occupy residues 79–133 (NSKE…DKSE) and 318–334 (RAVQ…RESP). A compositionally biased stretch (low complexity) spans 369 to 380 (HSGSQSHIISGS). Acidic residues predominate over residues 421-432 (DKEEDEETEEEI). Residues 452 to 462 (HYPDRELHYDS) show a composition bias toward basic and acidic residues. A compositionally biased stretch (polar residues) spans 496–507 (ISNAEVSTTESP). A compositionally biased stretch (basic residues) spans 579–592 (ANNRPLRHTNKRAK).

Its subcellular location is the nucleus. Functionally, transcription factor involved in epidermis differentiation. This Danio rerio (Zebrafish) protein is Zinc finger protein 750 (znf750).